The chain runs to 533 residues: MAMTLLPRHGKTHLANIPYGYYTATVSLIFIILLIGARKLIPVRQRNRSKWAKWALSSARGGSPLLYLVVLFVALLVPFVHHYSLLGYVGLYLKRLGRLSYVLATLNLFLTLRPNFLLPGYVYLDLIPLHKWLSRSLCLLALVHGVGFLVKWALDSQVSFVAKAFYNIPNLAGLVVGALMAFMVLLSVRPVRRFSYRSFYLTHIIGAWVFVFLTAYHARPGVFVPYTLLNAGLFVFYILSKTVPARGVELVSKSTDDVNNCLTRIVLPRKAMPEHFAPGSHLRISPYRRVNPLYYMLPSHPYTVASMPEDKDVELIVREHASGFHLLTGLGYTIQNHYESVPRQCLQSATRIALVCGGSGLSYALPIFRHFASEEKADQVKYLRLIWLVRDKYDVNVLGNIRSLASSVAQFDIFVTRSVPPDDTVESGSKLSPAQQQSPITDDLEFELESFGDQLDQNGALITPEIPNLPSGLASSFHFGRKLDWMTDLAQFVEREDLGSTWLVACGPKGLNDAAKLYAQQNEINLASETYAL.

7 consecutive transmembrane segments (helical) span residues 17-37 (IPYG…LIGA), 61-81 (GGSP…PFVH), 102-122 (VLAT…PGYV), 136-156 (SLCL…ALDS), 168-188 (IPNL…LLSV), 198-218 (SFYL…AYHA), and 220-240 (PGVF…YILS). The Ferric oxidoreductase domain occupies 96–213 (LGRLSYVLAT…IIGAWVFVFL (118 aa)). The FAD-binding FR-type domain maps to 240–366 (SKTVPARGVE…GGSGLSYALP (127 aa)).

The protein belongs to the ferric reductase (FRE) family. AIM14 subfamily.

The protein localises to the membrane. In terms of biological role, probable cell surface metalloreductase. May be involved in iron or copper homeostasis. This Lachancea thermotolerans (strain ATCC 56472 / CBS 6340 / NRRL Y-8284) (Yeast) protein is Probable metalloreductase AIM14 (AIM14).